Consider the following 160-residue polypeptide: Glutathione peroxidase homolog BsaA (160 aa).

The active site involves Cys-35.

The protein belongs to the glutathione peroxidase family.

The chain is Glutathione peroxidase homolog BsaA (bsaA) from Bacillus subtilis (strain 168).